The chain runs to 253 residues: Decarboxylase DEC1 (253 aa).

The active-site Schiff-base intermediate with acetoacetate is the lysine 121.

The protein belongs to the ADC family.

It functions in the pathway mycotoxin biosynthesis. Its function is as follows. Decarboxylase; part of the Tox1B locus, one of the 2 loci that mediate the biosynthesis of T-toxin, a family of linear polyketides 37 to 45 carbons in length, of which the major component is 41 carbons, and which leads to high virulence to maize. One of the PKSs (PKS1 or PKS2) could synthesize a precursor, used subsequently by the other PKS as starter unit, to add additional carbons. Variability in the length of the final carbon backbone C35-47 could be achieved by varying the number of condensation cycles, or use of different starter or extender units or might be due to decarboxylation of the penultimate product, catalyzed by DEC1. Additional proteins are required for the biosynthesis of T-toxin, including oxidoreductases RED1, RED2, RED3, LAM1 and OXI1, as well as esterase TOX9. The sequence is that of Decarboxylase DEC1 from Cochliobolus heterostrophus (strain C4 / ATCC 48331 / race T) (Southern corn leaf blight fungus).